Here is a 175-residue protein sequence, read N- to C-terminus: ATP synthase subunit b (175 aa).

A helical transmembrane segment spans residues 13 to 33 (LLSPNPGLIFWTAVTFLLLLL).

This sequence belongs to the ATPase B chain family. F-type ATPases have 2 components, F(1) - the catalytic core - and F(0) - the membrane proton channel. F(1) has five subunits: alpha(3), beta(3), gamma(1), delta(1), epsilon(1). F(0) has four main subunits: a(1), b(2) and c(10-14). The alpha and beta chains form an alternating ring which encloses part of the gamma chain. F(1) is attached to F(0) by a central stalk formed by the gamma and epsilon chains, while a peripheral stalk is formed by the delta and b chains.

It localises to the cell inner membrane. Its function is as follows. F(1)F(0) ATP synthase produces ATP from ADP in the presence of a proton or sodium gradient. F-type ATPases consist of two structural domains, F(1) containing the extramembraneous catalytic core and F(0) containing the membrane proton channel, linked together by a central stalk and a peripheral stalk. During catalysis, ATP synthesis in the catalytic domain of F(1) is coupled via a rotary mechanism of the central stalk subunits to proton translocation. Functionally, component of the F(0) channel, it forms part of the peripheral stalk, linking F(1) to F(0). The sequence is that of ATP synthase subunit b from Chloroherpeton thalassium (strain ATCC 35110 / GB-78).